Reading from the N-terminus, the 149-residue chain is Large ribosomal subunit protein eL19 (149 aa).

Residues 55–69 (KGISSARKKEVQEQK) are compositionally biased toward basic and acidic residues. The segment at 55 to 93 (KGISSARKKEVQEQKRKGKRKGPGSRRGAKGARTPKKEK) is disordered. The segment covering 70-88 (RKGKRKGPGSRRGAKGART) has biased composition (basic residues).

Belongs to the eukaryotic ribosomal protein eL19 family. Part of the 50S ribosomal subunit.

Its function is as follows. Binds to the 23S rRNA. The chain is Large ribosomal subunit protein eL19 from Methanococcus vannielii.